Here is a 477-residue protein sequence, read N- to C-terminus: MGKTPLLREDGRCQRNTFGGSKASSKGSSSSSSNNTVSSKKKPRRKADALMFIQIFIHLLKSNIGTGFLGLPLAVKNAGLLVGPVSLLAIGALTVHCMDILLNCACHLTSRLQRSFVNYEETTMYSLETCPSPWLRTHSVWGRYVVSFLLIVTQLGFCSVYFMFMADNLQQIVEEAHFTSNVCQPRQSLVMTSILDTRFYMLTILPFLILLVLVQNPQVLSIFSTLATITTLSSLALIFEYLIQIPHHSHLPLVASWKTFLLFFGTAIFTFEGVGMVLPLKSQMKSPQQFPAVLYLGMSFVIFLYICLGTLGYMKFGADTQASITLNLPNCWLYQSVKLMYSVGIFFTYALQFHVPAEIIVPYVVSRASENWALFIDLTVRAALVCLTCFSAVLIPRLDLVISLVGSVSSSALALIIPPLLEIATFYSENISCTTIAKDIMISILGLLGCVLGTYQALYEMTQQSRFPMLNSTNVHT.

The segment covering 1–13 (MGKTPLLREDGRC) has biased composition (basic and acidic residues). A disordered region spans residues 1 to 42 (MGKTPLLREDGRCQRNTFGGSKASSKGSSSSSSNNTVSSKKK). Residues 1–54 (MGKTPLLREDGRCQRNTFGGSKASSKGSSSSSSNNTVSSKKKPRRKADALMFIQ) are Cytoplasmic-facing. Residues 19–38 (GGSKASSKGSSSSSSNNTVS) are compositionally biased toward low complexity. A helical transmembrane segment spans residues 55 to 75 (IFIHLLKSNIGTGFLGLPLAV). The Extracellular segment spans residues 76 to 77 (KN). The chain crosses the membrane as a helical span at residues 78–98 (AGLLVGPVSLLAIGALTVHCM). At 99–144 (DILLNCACHLTSRLQRSFVNYEETTMYSLETCPSPWLRTHSVWGRY) the chain is on the cytoplasmic side. Residues 145–165 (VVSFLLIVTQLGFCSVYFMFM) form a helical membrane-spanning segment. Residues 166–202 (ADNLQQIVEEAHFTSNVCQPRQSLVMTSILDTRFYML) are Extracellular-facing. A helical transmembrane segment spans residues 203–223 (TILPFLILLVLVQNPQVLSIF). Topologically, residues 224 to 225 (ST) are cytoplasmic. Residues 226-246 (LATITTLSSLALIFEYLIQIP) form a helical membrane-spanning segment. Residues 247–259 (HHSHLPLVASWKT) lie on the Extracellular side of the membrane. The helical transmembrane segment at 260–280 (FLLFFGTAIFTFEGVGMVLPL) threads the bilayer. At 281-291 (KSQMKSPQQFP) the chain is on the cytoplasmic side. Residues 292-312 (AVLYLGMSFVIFLYICLGTLG) form a helical membrane-spanning segment. Residues 313–344 (YMKFGADTQASITLNLPNCWLYQSVKLMYSVG) are Extracellular-facing. Residues 345–365 (IFFTYALQFHVPAEIIVPYVV) form a helical membrane-spanning segment. Residues 366–374 (SRASENWAL) lie on the Cytoplasmic side of the membrane. Residues 375-395 (FIDLTVRAALVCLTCFSAVLI) traverse the membrane as a helical segment. Residues 396-399 (PRLD) lie on the Extracellular side of the membrane. Residues 400-420 (LVISLVGSVSSSALALIIPPL) form a helical membrane-spanning segment. Residues 421–439 (LEIATFYSENISCTTIAKD) are Cytoplasmic-facing. Residues 440–460 (IMISILGLLGCVLGTYQALYE) form a helical membrane-spanning segment. Over 461-477 (MTQQSRFPMLNSTNVHT) the chain is Extracellular.

The protein belongs to the amino acid/polyamine transporter 2 family.

It is found in the membrane. The chain is Proton-coupled amino acid transporter 3 (Slc36a3) from Rattus norvegicus (Rat).